Reading from the N-terminus, the 408-residue chain is UPF0761 membrane protein NMC0462 (408 aa).

6 consecutive transmembrane segments (helical) span residues 43-63 (LLAL…FPVF), 100-120 (LTAI…RTID), 139-159 (FLVY…GISF), 176-196 (WSGA…LWGL), 210-230 (AFVG…LFTW), and 248-268 (VPFF…GAVL).

Belongs to the UPF0761 family.

It localises to the cell inner membrane. The chain is UPF0761 membrane protein NMC0462 from Neisseria meningitidis serogroup C / serotype 2a (strain ATCC 700532 / DSM 15464 / FAM18).